A 284-amino-acid polypeptide reads, in one-letter code: 2-dehydro-3-deoxyphosphooctonate aldolase (284 aa).

The protein belongs to the KdsA family.

Its subcellular location is the cytoplasm. The catalysed reaction is D-arabinose 5-phosphate + phosphoenolpyruvate + H2O = 3-deoxy-alpha-D-manno-2-octulosonate-8-phosphate + phosphate. Its pathway is carbohydrate biosynthesis; 3-deoxy-D-manno-octulosonate biosynthesis; 3-deoxy-D-manno-octulosonate from D-ribulose 5-phosphate: step 2/3. The protein operates within bacterial outer membrane biogenesis; lipopolysaccharide biosynthesis. The protein is 2-dehydro-3-deoxyphosphooctonate aldolase of Vibrio atlanticus (strain LGP32) (Vibrio splendidus (strain Mel32)).